Here is a 1226-residue protein sequence, read N- to C-terminus: Integrin alpha pat-2 (1226 aa).

Residues 1-25 (MREGSFPRRIGLLLGLLGLLAGVAT) form the signal peptide. At 26 to 1154 (FNIDTKNVVV…IASEEGRDLP (1129 aa)) the chain is on the extracellular side. 7 FG-GAP repeats span residues 27 to 94 (NIDT…TCRE), 108 to 171 (NGSH…NAEE), 178 to 233 (EPAR…TDRP), 234 to 290 (NTEY…MMIN), 291 to 345 (LTDE…KPQY), 362 to 421 (GKQI…GVRE), and 425 to 488 (QKIE…PESA). N-linked (GlcNAc...) asparagine glycans are attached at residues Asn108, Asn228, and Asn290. Asn608 is a glycosylation site (N-linked (GlcNAc...) asparagine). The short motif at 620–622 (RGD) is the Cell attachment site element. An N-linked (GlcNAc...) asparagine glycan is attached at Asn679. A disordered region spans residues 709–733 (SVGGDGSKSAPACSPTSDEPDSDGK). Residues Asn775 and Asn819 are each glycosylated (N-linked (GlcNAc...) asparagine). Disordered regions lie at residues 898–958 (LRIT…HVYE) and 982–1040 (DYEY…ARFS). Over residues 920–931 (REEDDESYEDET) the composition is skewed to acidic residues. Residues 932 to 951 (TTQSQSTRHQSTQHQTHHQS) are compositionally biased toward low complexity. A compositionally biased stretch (acidic residues) spans 985-1005 (YIPDDQEYDGDDFEEEDDEDF). Residues 1010–1026 (SKRVKRNPTPKKKKKGG) are compositionally biased toward basic residues. Basic and acidic residues predominate over residues 1027–1040 (EHRGEPRSDKARFS). Residues 1155-1177 (WWLYLLAILIGLAILILLILLLW) traverse the membrane as a helical segment. Topologically, residues 1178 to 1226 (RCGFFKRNRPPTEHAELRADRQPNAQYADSQSRYTSQDQYNQGRHGQML) are cytoplasmic. The interval 1191 to 1226 (HAELRADRQPNAQYADSQSRYTSQDQYNQGRHGQML) is disordered. Over residues 1200-1226 (PNAQYADSQSRYTSQDQYNQGRHGQML) the composition is skewed to polar residues.

The protein belongs to the integrin alpha chain family. In terms of assembly, heterodimer of an alpha and a beta subunit. Interacts with beta subunit pat-3. Interacts with dep-1. Component of an integrin containing attachment complex, composed of at least pat-2, pat-3, pat-4, pat-6, unc-52, unc-97 and unc-112. As to expression, expressed in body-wall muscle cells, distal tip cells, and vulval tissue.

The protein localises to the membrane. Functionally, required for muscle development probably through the regulation of the actin-myosin cytoskeleton. Component of an integrin containing attachment complex, which is required for muscle maintenance. During the formation of neuromuscular junctions at the larval stage, negatively regulates membrane protrusion from body wall muscles, probably through lamins such as epi-1, lam-2 and unc-52. Required for distal tip cell migration and dorsal pathfinding. Required for egg-laying. May play a role in cell motility and cell-cell interactions. Plays a role in vulval development. Probably within the alpha pat-2/beta pat-3 integrin receptor complex, plays a role in the negative regulation of let-23 signaling and vulval induction. This is probably partly by restricting the mobility of the let-23 receptor on the plasma membrane of vulval cells which thereby attenuates let-23 signaling. The chain is Integrin alpha pat-2 from Caenorhabditis elegans.